The following is a 415-amino-acid chain: Imidazolonepropionase (415 aa).

Fe(3+) contacts are provided by histidine 74 and histidine 76. The Zn(2+) site is built by histidine 74 and histidine 76. 4-imidazolone-5-propanoate contacts are provided by arginine 83, tyrosine 146, and histidine 179. Residue tyrosine 146 coordinates N-formimidoyl-L-glutamate. Residue histidine 244 coordinates Fe(3+). Histidine 244 contacts Zn(2+). Glutamine 247 contributes to the 4-imidazolone-5-propanoate binding site. Residue aspartate 319 coordinates Fe(3+). Aspartate 319 contributes to the Zn(2+) binding site. N-formimidoyl-L-glutamate is bound by residues asparagine 321 and glycine 323. Threonine 324 contributes to the 4-imidazolone-5-propanoate binding site.

Belongs to the metallo-dependent hydrolases superfamily. HutI family. It depends on Zn(2+) as a cofactor. Fe(3+) is required as a cofactor.

The protein localises to the cytoplasm. The enzyme catalyses 4-imidazolone-5-propanoate + H2O = N-formimidoyl-L-glutamate. The protein operates within amino-acid degradation; L-histidine degradation into L-glutamate; N-formimidoyl-L-glutamate from L-histidine: step 3/3. In terms of biological role, catalyzes the hydrolytic cleavage of the carbon-nitrogen bond in imidazolone-5-propanoate to yield N-formimidoyl-L-glutamate. It is the third step in the universal histidine degradation pathway. The chain is Imidazolonepropionase from Cupriavidus metallidurans (strain ATCC 43123 / DSM 2839 / NBRC 102507 / CH34) (Ralstonia metallidurans).